Here is a 259-residue protein sequence, read N- to C-terminus: Glutamate 5-kinase (259 aa).

Lysine 18 lines the ATP pocket. The substrate site is built by serine 54, aspartate 141, and asparagine 153. 173 to 174 (SD) serves as a coordination point for ATP.

Belongs to the glutamate 5-kinase family.

It is found in the cytoplasm. The enzyme catalyses L-glutamate + ATP = L-glutamyl 5-phosphate + ADP. It functions in the pathway amino-acid biosynthesis; L-proline biosynthesis; L-glutamate 5-semialdehyde from L-glutamate: step 1/2. In terms of biological role, catalyzes the transfer of a phosphate group to glutamate to form L-glutamate 5-phosphate. The chain is Glutamate 5-kinase from Clavibacter michiganensis subsp. michiganensis (strain NCPPB 382).